Reading from the N-terminus, the 1158-residue chain is ATP-dependent helicase/deoxyribonuclease subunit B (1158 aa).

Residue 8-15 participates in ATP binding; the sequence is GRAGTGKS. [4Fe-4S] cluster-binding residues include C791, C1112, C1115, and C1121.

Belongs to the helicase family. AddB/RexB type 1 subfamily. Heterodimer of AddA and AddB. It depends on Mg(2+) as a cofactor. [4Fe-4S] cluster serves as cofactor.

Functionally, the heterodimer acts as both an ATP-dependent DNA helicase and an ATP-dependent, dual-direction single-stranded exonuclease. Recognizes the chi site generating a DNA molecule suitable for the initiation of homologous recombination. The AddB subunit has 5' -&gt; 3' nuclease activity but not helicase activity. This Clostridium perfringens (strain 13 / Type A) protein is ATP-dependent helicase/deoxyribonuclease subunit B.